Reading from the N-terminus, the 204-residue chain is Outer-membrane lipoprotein LolB (204 aa).

The first 16 residues, 1–16 (MLRHLLVFSLIALLAG), serve as a signal peptide directing secretion. Cys-17 carries the N-palmitoyl cysteine lipid modification. Residue Cys-17 is the site of S-diacylglycerol cysteine attachment.

Belongs to the LolB family. As to quaternary structure, monomer.

Its subcellular location is the cell outer membrane. Functionally, plays a critical role in the incorporation of lipoproteins in the outer membrane after they are released by the LolA protein. This chain is Outer-membrane lipoprotein LolB, found in Ectopseudomonas mendocina (strain ymp) (Pseudomonas mendocina).